The sequence spans 700 residues: DNA ligase (700 aa).

Residues aspartate 61–aspartate 65, serine 110–leucine 111, and glutamate 141 each bind NAD(+). Residue lysine 143 is the N6-AMP-lysine intermediate of the active site. Residues arginine 164, glutamate 202, lysine 321, and lysine 345 each contribute to the NAD(+) site. Cysteine 439, cysteine 442, cysteine 457, and cysteine 462 together coordinate Zn(2+). Positions alanine 619 to lysine 700 constitute a BRCT domain.

Belongs to the NAD-dependent DNA ligase family. LigA subfamily. Mg(2+) serves as cofactor. It depends on Mn(2+) as a cofactor.

It catalyses the reaction NAD(+) + (deoxyribonucleotide)n-3'-hydroxyl + 5'-phospho-(deoxyribonucleotide)m = (deoxyribonucleotide)n+m + AMP + beta-nicotinamide D-nucleotide.. DNA ligase that catalyzes the formation of phosphodiester linkages between 5'-phosphoryl and 3'-hydroxyl groups in double-stranded DNA using NAD as a coenzyme and as the energy source for the reaction. It is essential for DNA replication and repair of damaged DNA. In Hydrogenobaculum sp. (strain Y04AAS1), this protein is DNA ligase.